We begin with the raw amino-acid sequence, 414 residues long: Serine hydroxymethyltransferase (414 aa).

(6S)-5,6,7,8-tetrahydrofolate-binding positions include leucine 121 and 125–127 (GHL). Residue lysine 229 is modified to N6-(pyridoxal phosphate)lysine.

This sequence belongs to the SHMT family. Homodimer. Pyridoxal 5'-phosphate is required as a cofactor.

The protein localises to the cytoplasm. It carries out the reaction (6R)-5,10-methylene-5,6,7,8-tetrahydrofolate + glycine + H2O = (6S)-5,6,7,8-tetrahydrofolate + L-serine. The protein operates within one-carbon metabolism; tetrahydrofolate interconversion. Its pathway is amino-acid biosynthesis; glycine biosynthesis; glycine from L-serine: step 1/1. Functionally, catalyzes the reversible interconversion of serine and glycine with tetrahydrofolate (THF) serving as the one-carbon carrier. This reaction serves as the major source of one-carbon groups required for the biosynthesis of purines, thymidylate, methionine, and other important biomolecules. Also exhibits THF-independent aldolase activity toward beta-hydroxyamino acids, producing glycine and aldehydes, via a retro-aldol mechanism. The sequence is that of Serine hydroxymethyltransferase from Janthinobacterium sp. (strain Marseille) (Minibacterium massiliensis).